A 393-amino-acid polypeptide reads, in one-letter code: Protein TsgA (393 aa).

Transmembrane regions (helical) follow at residues 11–31 (WISF…GMVM), 51–71 (FLNA…EIVP), 78–98 (FGFL…SLAL), 101–121 (AAMF…TFLI), 134–154 (LLFT…IAAF), 162–182 (WYWV…LTFG), 206–226 (IGVL…LGFI), 245–265 (TLVS…SFIL), 273–293 (ILTV…TGTP), 297–317 (AWSI…IITL), 332–352 (FVLT…GPIV), and 361–381 (LLTA…LGFV).

This sequence belongs to the major facilitator superfamily. TsgA family.

It is found in the cell inner membrane. The polypeptide is Protein TsgA (Shigella dysenteriae serotype 1 (strain Sd197)).